Here is a 252-residue protein sequence, read N- to C-terminus: tRNA pseudouridine synthase A (252 aa).

Asp-52 serves as the catalytic Nucleophile. Tyr-110 lines the substrate pocket.

Belongs to the tRNA pseudouridine synthase TruA family. Homodimer.

The catalysed reaction is uridine(38/39/40) in tRNA = pseudouridine(38/39/40) in tRNA. Functionally, formation of pseudouridine at positions 38, 39 and 40 in the anticodon stem and loop of transfer RNAs. This chain is tRNA pseudouridine synthase A, found in Syntrophotalea carbinolica (strain DSM 2380 / NBRC 103641 / GraBd1) (Pelobacter carbinolicus).